Reading from the N-terminus, the 586-residue chain is Penicillin-binding protein activator LpoA (586 aa).

The first 26 residues, 1–26 (MLSILMQGLRLKKCFLPILVMFFLAG), serve as a signal peptide directing secretion. The N-palmitoyl cysteine moiety is linked to residue Cys27. Residue Cys27 is the site of S-diacylglycerol cysteine attachment.

Belongs to the LpoA family. As to quaternary structure, interacts with PBP1a.

Its subcellular location is the cell outer membrane. Functionally, regulator of peptidoglycan synthesis that is essential for the function of penicillin-binding protein 1A (PBP1a). In Histophilus somni (strain 2336) (Haemophilus somnus), this protein is Penicillin-binding protein activator LpoA.